Consider the following 264-residue polypeptide: MNTQPADFSAAQAATSLTQFRSAAPLVHCLTNDVVQSFTANVLLALNASPAMVVDPEEAAQFSAVADALLINVGTLERTRAEAMRAAVNSAHQAGTPWVLDPVAVGGLTFRTEFCRELLTWKPAAIRGNASEIMALAGLAAQGRGVDSADDSLAALPAARELARQVGTIVVVTGAVDYVTDGERDIAVTGGDSMMTRVVGTGCALSAVVAGFCSLEGDRLSHVTAACYVMALAGQQATSVSQGTGSFIPHFLDRLYTLRAEDLA.

Substrate is bound at residue Met52. 2 residues coordinate ATP: Arg127 and Thr173. Gly200 serves as a coordination point for substrate.

This sequence belongs to the Thz kinase family. Mg(2+) is required as a cofactor.

The catalysed reaction is 5-(2-hydroxyethyl)-4-methylthiazole + ATP = 4-methyl-5-(2-phosphooxyethyl)-thiazole + ADP + H(+). It participates in cofactor biosynthesis; thiamine diphosphate biosynthesis; 4-methyl-5-(2-phosphoethyl)-thiazole from 5-(2-hydroxyethyl)-4-methylthiazole: step 1/1. Catalyzes the phosphorylation of the hydroxyl group of 4-methyl-5-beta-hydroxyethylthiazole (THZ). This is Hydroxyethylthiazole kinase from Pectobacterium atrosepticum (strain SCRI 1043 / ATCC BAA-672) (Erwinia carotovora subsp. atroseptica).